Reading from the N-terminus, the 130-residue chain is S-protein homolog 32 (130 aa).

An N-terminal signal peptide occupies residues Met-1 to Gly-21.

This sequence belongs to the plant self-incompatibility (S1) protein family.

It localises to the secreted. This is S-protein homolog 32 from Arabidopsis thaliana (Mouse-ear cress).